The following is a 452-amino-acid chain: Class E vacuolar protein-sorting machinery protein HSE1 (452 aa).

N-acetylserine is present on serine 2. Residues 15–145 enclose the VHS domain; the sequence is ATDPKLRSDN…KIKRKAPYLV (131 aa). Disordered regions lie at residues 144-166 and 187-212; these read LVQPNVPEKHNMSTQADNSDDEE and QEKESAEVLPQQQQQHQQQNQAPAHK. Serine 162 carries the post-translational modification Phosphoserine. Positions 162–181 constitute a UIM domain; the sequence is SDDEELQKALKMSLFEYEKQ. The span at 197–207 shows a compositional bias: low complexity; the sequence is QQQQQHQQQNQ. Residues 217–276 enclose the SH3 domain; that stretch reads TVVRRVRALYDLTTNEPDELSFRKGDVITVLEQVYRDWWKGALRGNMGIFPLNYVTPIVE. The disordered stretch occupies residues 389–452; it reads AGMTHANNTP…VSQPPPGYEQ (64 aa). Residues 393–433 show a composition bias toward polar residues; sequence HANNTPVMPPQRQSYQSNEYSPYPSNLPIQHPTNSANNTPQ.

The protein belongs to the STAM family. In terms of assembly, component of the ESCRT-0 complex composed of HSE1 and VPS27. Interacts with the ESCRT-I subunit VPS23, the UBP7 deubiquitinase and the E3 ligase RSP5. May form a complex composed of VPS27, HSE1 and DOA1. Interacts (via SH3 domain) with DOA1.

It localises to the endosome membrane. In terms of biological role, component of the ESCRT-0 complex which is the sorting receptor for ubiquitinated cargo proteins at the multivesicular body (MVB) and recruits ESCRT-I to the MVB outer membrane. In Saccharomyces cerevisiae (strain ATCC 204508 / S288c) (Baker's yeast), this protein is Class E vacuolar protein-sorting machinery protein HSE1 (HSE1).